The sequence spans 149 residues: 3-dehydroquinate dehydratase 2 (149 aa).

The active-site Proton acceptor is Tyr24. Substrate contacts are provided by Asn75, His81, and Asp88. Residue His101 is the Proton donor of the active site. Residues 102 to 103 (LS) and Arg112 each bind substrate.

This sequence belongs to the type-II 3-dehydroquinase family. As to quaternary structure, homododecamer.

The catalysed reaction is 3-dehydroquinate = 3-dehydroshikimate + H2O. It functions in the pathway metabolic intermediate biosynthesis; chorismate biosynthesis; chorismate from D-erythrose 4-phosphate and phosphoenolpyruvate: step 3/7. Catalyzes a trans-dehydration via an enolate intermediate. The sequence is that of 3-dehydroquinate dehydratase 2 (aroQ2) from Pseudomonas putida (strain ATCC 47054 / DSM 6125 / CFBP 8728 / NCIMB 11950 / KT2440).